Consider the following 759-residue polypeptide: uncharacterized protein (759 aa).

Low complexity-rich tracts occupy residues 1-36 (MSSN…NETN), 142-211 (QQQN…NQHH), and 221-347 (NHSN…GSSS). 5 disordered regions span residues 1-47 (MSSN…AQTP), 142-380 (QQQN…PSIG), 409-428 (NNNC…GLGY), 463-504 (IING…NFEN), and 654-759 (LVDD…YLNK). The segment covering 348-360 (PFQDQARSPSSSF) has biased composition (polar residues). 2 stretches are compositionally biased toward low complexity: residues 463-495 (IING…GNNN) and 660-747 (HISN…DNNN).

This is an uncharacterized protein from Dictyostelium discoideum (Social amoeba).